Here is a 136-residue protein sequence, read N- to C-terminus: Small ribosomal subunit protein uS9 (136 aa).

The tract at residues Ser97–Arg136 is disordered. Over residues Pro98 to Ala116 the composition is skewed to basic and acidic residues. Positions Lys117 to Arg136 are enriched in basic residues.

It belongs to the universal ribosomal protein uS9 family.

This is Small ribosomal subunit protein uS9 from Prochlorococcus marinus (strain MIT 9215).